The primary structure comprises 265 residues: TATA-box-binding protein (265 aa).

Residues 1 to 40 form a disordered region; sequence MYNPSQAVPVSLHKNQDNQDGGQQRSHYPQISSQQSQSYL. Positions 18-29 are enriched in polar residues; the sequence is NQDGGQQRSHYP. 2 tandem repeats follow at residues 91-167 and 181-258.

The protein belongs to the TBP family. As to quaternary structure, belongs to the TFIID complex together with the TBP-associated factors (TAFs). Binds DNA as monomer.

The protein localises to the nucleus. Its function is as follows. General transcription factor that functions at the core of the DNA-binding multiprotein factor TFIID. Binding of TFIID to the TATA box is the initial transcriptional step of the pre-initiation complex (PIC), playing a role in the activation of eukaryotic genes transcribed by RNA polymerase II. This is TATA-box-binding protein from Strongylocentrotus purpuratus (Purple sea urchin).